The chain runs to 840 residues: MTQVTVKELAQVVDTPVERLLLQMRDAGLPHTSAEQVVTDSEKQALLTHLKGSHGDRASEPRKITLQRKTTTTLKVGGSKTVSVEVRKKKTYVKRSPDEIEAERQRELEEQRAAEEAERLKAEEAAARQRAEEEARKAEEAARAKAAQEAAATAGAEPAVVADVAVAEPVAKPAAVEERKKEEPRRVPKRDEDDDRRDRKHTQHRPSVKEKEKVPAPRVAPRSTDEESDGYRRGGRGGKSKLKKRNQHGFQNPTGPIVREVNIGETITVAELAAQMSVKGAEVVKFMFKMGSPVTINQVLDQETAQLVAEELGHKVKLVSENALEEQLAESLKFEGEAVTRAPVVTVMGHVDHGKTSLLDYIRRAKVAAGEAGGITQHIGAYHVETERGMVTFLDTPGHAAFTAMRARGAQATDIVILVVAADDGVMPQTQEAVQHAKAAGVPIVVAVNKIDKPEANPDNIKNGLAALDVIPEEWGGDAPFVPVSAKLGTGVDELLEAVLLQAEVLELKATPSAPGRGVVVESRLDKGRGPVATVLVQDGTLRQGDMVLVGINYGRVRAMLDENGKPIKEAGPSIPVEILGLDGTPDAGDEMTVVADEKKAREVALFRQGKFREVKLARAHAGKLENIFENMGQEEKKTLNIVLKADVRGSLEALQGSLSGLGNDEVQVRVVGGGVGGITESDANLALASNAVLFGFNVRADAGARKIVEAEGLDMRYYNVIYDIIEDVKKALTGMLGSDLRENILGIAEVRDVFRSPKFGAIAGCMVTEGMVHRNRPIRVLRDDVVIFEGELESLRRFKDDVAEVRAGMECGIGVKSYNDVKVGDKIEVFEKVEVARSL.

A compositionally biased stretch (basic and acidic residues) spans 95 to 143 (RSPDEIEAERQRELEEQRAAEEAERLKAEEAAARQRAEEEARKAEEAAR). 2 disordered regions span residues 95 to 155 (RSPD…ATAG) and 173 to 256 (PAAV…PTGP). The span at 144–155 (AKAAQEAAATAG) shows a compositional bias: low complexity. Basic and acidic residues-rich tracts occupy residues 175-191 (AVEE…PKRD) and 223-232 (STDEESDGYR). Residues 233-247 (RGGRGGKSKLKKRNQ) show a composition bias toward basic residues. The region spanning 340-509 (TRAPVVTVMG…LLQAEVLELK (170 aa)) is the tr-type G domain. The tract at residues 349-356 (GHVDHGKT) is G1. Residue 349–356 (GHVDHGKT) coordinates GTP. Positions 374–378 (GITQH) are G2. The segment at 395-398 (DTPG) is G3. GTP-binding positions include 395-399 (DTPGH) and 449-452 (NKID). Positions 449-452 (NKID) are G4. A G5 region spans residues 485–487 (SAK).

The protein belongs to the TRAFAC class translation factor GTPase superfamily. Classic translation factor GTPase family. IF-2 subfamily.

Its subcellular location is the cytoplasm. Its function is as follows. One of the essential components for the initiation of protein synthesis. Protects formylmethionyl-tRNA from spontaneous hydrolysis and promotes its binding to the 30S ribosomal subunits. Also involved in the hydrolysis of GTP during the formation of the 70S ribosomal complex. The sequence is that of Translation initiation factor IF-2 from Pseudomonas aeruginosa (strain ATCC 15692 / DSM 22644 / CIP 104116 / JCM 14847 / LMG 12228 / 1C / PRS 101 / PAO1).